The chain runs to 254 residues: Serotonin N-acetyltransferase 1, chloroplastic (254 aa).

The N-terminal 74 residues, 1-74, are a transit peptide targeting the chloroplast; the sequence is MAPAASASAS…LRSGFLKSNN (74 aa). An N-acetyltransferase domain is found at 111–254; that stretch reads IIFSSAGDVN…IKGMFWYPRF (144 aa).

Belongs to the acetyltransferase family. As to expression, expressed in roots and shoots.

It is found in the plastid. The protein localises to the chloroplast. The protein resides in the nucleus. It carries out the reaction serotonin + acetyl-CoA = N-acetylserotonin + CoA + H(+). The catalysed reaction is tyramine + acetyl-CoA = N-acetyltyramine + CoA + H(+). It catalyses the reaction tryptamine + acetyl-CoA = N-acetyltryptamine + CoA + H(+). The enzyme catalyses 5-methoxytryptamine + acetyl-CoA = melatonin + CoA + H(+). It participates in aromatic compound metabolism; melatonin biosynthesis; melatonin from serotonin: step 1/2. In terms of biological role, catalyzes the N-acetylation of serotonin into N-acetylserotonin, the penultimate step in the synthesis of melatonin. Catalyzes in vitro the N-acetylation of tryptamine to produce N-acetyltryptamine, 5-methoxytryptamine to produce melatonin and tyramine to produce N-acetyltyramine. This chain is Serotonin N-acetyltransferase 1, chloroplastic, found in Oryza sativa subsp. japonica (Rice).